The sequence spans 162 residues: Interleukin-15 (162 aa).

A signal peptide spans 1–29 (MRISKPHLRITSIQCYVCLLLNTHFLTEA). A propeptide spanning residues 30 to 48 (GIRVFILGCISAGIPKTEA) is cleaved from the precursor. Intrachain disulfides connect cysteine 83–cysteine 133 and cysteine 90–cysteine 136. Residues asparagine 119, asparagine 127, and asparagine 143 are each glycosylated (N-linked (GlcNAc...) asparagine).

The protein belongs to the IL-15/IL-21 family.

It localises to the secreted. In terms of biological role, cytokine that plays a major role in the development of inflammatory and protective immune responses to microbial invaders and parasites by modulating immune cells of both the innate and adaptive immune systems. Stimulates the proliferation of natural killer cells, T-cells and B-cells and promotes the secretion of several cytokines. In monocytes, induces the production of IL8 and monocyte chemotactic protein 1/CCL2, two chemokines that attract neutrophils and monocytes respectively to sites of infection. Unlike most cytokines, which are secreted in soluble form, IL15 is expressed in association with its high affinity IL15RA on the surface of IL15-producing cells and delivers signals to target cells that express IL2RB and IL2RG receptor subunits. Binding to its receptor triggers the phosphorylation of JAK1 and JAK3 and the recruitment and subsequent phosphorylation of signal transducer and activator of transcription-3/STAT3 and STAT5. In mast cells, induces the rapid tyrosine phosphorylation of STAT6 and thereby controls mast cell survival and release of cytokines such as IL4. The protein is Interleukin-15 (IL15) of Marmota monax (Woodchuck).